The following is a 227-amino-acid chain: Zinc finger protein 511 (227 aa).

C2H2-type zinc fingers lie at residues 80–105, 107–130, and 144–169; these read FTCQ…HMMH, NTCS…LEWH, and YQCL…VRLH. A disordered region spans residues 180–204; it reads PKTNRGPAMPAAADAATRAPTDDSD. The span at 186-198 shows a compositional bias: low complexity; the sequence is PAMPAAADAATRA.

This sequence belongs to the krueppel C2H2-type zinc-finger protein family.

It is found in the nucleus. Its function is as follows. May be involved in transcriptional regulation. The protein is Zinc finger protein 511 (Znf511) of Mus musculus (Mouse).